Consider the following 287-residue polypeptide: Small ribosomal subunit biogenesis GTPase RsgA (287 aa).

In terms of domain architecture, CP-type G spans 61-218; sequence SSELIRPTVA…LVDTPGFTTL (158 aa). Residues 110–113 and 161–169 contribute to the GTP site; these read NKED and GPSGAGKST. Zn(2+) is bound by residues Cys242, Cys247, His249, and Cys255.

The protein belongs to the TRAFAC class YlqF/YawG GTPase family. RsgA subfamily. As to quaternary structure, monomer. Associates with 30S ribosomal subunit, binds 16S rRNA. Zn(2+) is required as a cofactor.

Its subcellular location is the cytoplasm. Its function is as follows. One of several proteins that assist in the late maturation steps of the functional core of the 30S ribosomal subunit. Helps release RbfA from mature subunits. May play a role in the assembly of ribosomal proteins into the subunit. Circularly permuted GTPase that catalyzes slow GTP hydrolysis, GTPase activity is stimulated by the 30S ribosomal subunit. The polypeptide is Small ribosomal subunit biogenesis GTPase RsgA (Clostridium perfringens (strain 13 / Type A)).